Consider the following 487-residue polypeptide: Protein nucleotidyltransferase YdiU (487 aa).

ATP is bound by residues glycine 90, glycine 92, arginine 93, lysine 113, aspartate 125, glycine 126, arginine 176, and arginine 183. The Proton acceptor role is filled by aspartate 252. Mg(2+) contacts are provided by asparagine 253 and aspartate 262. Aspartate 262 contributes to the ATP binding site.

The protein belongs to the SELO family. Mg(2+) serves as cofactor. It depends on Mn(2+) as a cofactor.

The catalysed reaction is L-seryl-[protein] + ATP = 3-O-(5'-adenylyl)-L-seryl-[protein] + diphosphate. It catalyses the reaction L-threonyl-[protein] + ATP = 3-O-(5'-adenylyl)-L-threonyl-[protein] + diphosphate. It carries out the reaction L-tyrosyl-[protein] + ATP = O-(5'-adenylyl)-L-tyrosyl-[protein] + diphosphate. The enzyme catalyses L-histidyl-[protein] + UTP = N(tele)-(5'-uridylyl)-L-histidyl-[protein] + diphosphate. The catalysed reaction is L-seryl-[protein] + UTP = O-(5'-uridylyl)-L-seryl-[protein] + diphosphate. It catalyses the reaction L-tyrosyl-[protein] + UTP = O-(5'-uridylyl)-L-tyrosyl-[protein] + diphosphate. Functionally, nucleotidyltransferase involved in the post-translational modification of proteins. It can catalyze the addition of adenosine monophosphate (AMP) or uridine monophosphate (UMP) to a protein, resulting in modifications known as AMPylation and UMPylation. The polypeptide is Protein nucleotidyltransferase YdiU (Pseudomonas fluorescens (strain SBW25)).